The following is a 133-amino-acid chain: uncharacterized protein (133 aa).

This is an uncharacterized protein from Methanothermobacter marburgensis (strain ATCC BAA-927 / DSM 2133 / JCM 14651 / NBRC 100331 / OCM 82 / Marburg) (Methanobacterium thermoautotrophicum).